A 142-amino-acid chain; its full sequence is Large ribosomal subunit protein mL42 (142 aa).

The transit peptide at 1–32 directs the protein to the mitochondrion; sequence MALAAVKWAISSRTMLKHLFPVENGALYCVGH.

This sequence belongs to the mitochondrion-specific ribosomal protein mL42 family. In terms of assembly, component of the mitochondrial ribosome large subunit (39S) which comprises a 16S rRNA and about 50 distinct proteins. Component of the mitochondrial ribosome small subunit (28S) which comprises a 12S rRNA and about 30 distinct proteins.

It is found in the mitochondrion. The chain is Large ribosomal subunit protein mL42 (MRPL42) from Bos taurus (Bovine).